A 102-amino-acid chain; its full sequence is Large ribosomal subunit protein bL21 (102 aa).

Belongs to the bacterial ribosomal protein bL21 family. In terms of assembly, part of the 50S ribosomal subunit. Contacts protein L20.

Its function is as follows. This protein binds to 23S rRNA in the presence of protein L20. This chain is Large ribosomal subunit protein bL21, found in Shouchella clausii (strain KSM-K16) (Alkalihalobacillus clausii).